The sequence spans 464 residues: NADH dehydrogenase [ubiquinone] flavoprotein 1, mitochondrial (464 aa).

A mitochondrion-targeting transit peptide spans 1-20 (MLAARRLLGWSLPARVSVRF). An N6-acetyllysine; alternate modification is found at Lys81. N6-succinyllysine; alternate is present on Lys81. Position 87–96 (87–96 (GRGGAGFPTG)) interacts with NADH. An N6-acetyllysine modification is found at Lys104. 199 to 247 (RGAGAYICGEETALIESIEGKQGKPRLKPPFPADVGVFGCPTTVANVET) contacts FMN. Residue Arg257 is modified to Omega-N-methylarginine. Lys375 carries the N6-acetyllysine modification. [4Fe-4S] cluster-binding residues include Cys379, Cys382, Cys385, and Cys425.

This sequence belongs to the complex I 51 kDa subunit family. As to quaternary structure, core subunit of respiratory chain NADH dehydrogenase (Complex I) which is composed of 45 different subunits. This is a component of the flavoprotein-sulfur (FP) fragment of the enzyme. Interacts with RAB5IF. Requires FMN as cofactor. It depends on [4Fe-4S] cluster as a cofactor.

The protein localises to the mitochondrion inner membrane. It catalyses the reaction a ubiquinone + NADH + 5 H(+)(in) = a ubiquinol + NAD(+) + 4 H(+)(out). Its function is as follows. Core subunit of the mitochondrial membrane respiratory chain NADH dehydrogenase (Complex I) which catalyzes electron transfer from NADH through the respiratory chain, using ubiquinone as an electron acceptor. Part of the peripheral arm of the enzyme, where the electrons from NADH are accepted by flavin mononucleotide (FMN) and then passed along a chain of iron-sulfur clusters by electron tunnelling to the final acceptor ubiquinone. Contains FMN, which is the initial electron acceptor as well as one iron-sulfur cluster. The protein is NADH dehydrogenase [ubiquinone] flavoprotein 1, mitochondrial of Pongo pygmaeus (Bornean orangutan).